We begin with the raw amino-acid sequence, 495 residues long: YTH domain-containing protein ECT3 (495 aa).

In terms of domain architecture, YTH spans 261–398 (AKFYVIKSYS…EQGIKVIKIF (138 aa)). Residues 267 to 269 (KSY), Asp-273, 283 to 284 (WS), Asn-316, Trp-340, Trp-345, and Trp-353 each bind RNA.

In terms of tissue distribution, expressed in the shoot apex, at the sites of leaf formation, and in emerging leaves.

The protein resides in the cytoplasm. Functionally, specifically recognizes and binds N6-methyladenosine (m6A)-containing RNAs, and regulates mRNA stability. M6A is a modification present at internal sites of mRNAs and some non-coding RNAs and plays a role in mRNA stability and processing. Required for the correct timing of leaf formation and normal leaf morphology. Required for proper trichome branching and morphology. Functions redundantly with ECT2. This Arabidopsis thaliana (Mouse-ear cress) protein is YTH domain-containing protein ECT3.